Here is a 448-residue protein sequence, read N- to C-terminus: Keratin, type I cytoskeletal 27 (448 aa).

The tract at residues 1-73 is head; sequence MSVRFSSASR…ANEHGLLSGN (73 aa). The interval 74-109 is coil 1A; it reads EKVTMQNLNDRLASYLENVQALEEANADLEQKIKDW. The IF rod domain occupies 74-389; the sequence is EKVTMQNLND…RLIDGDEGSC (316 aa). The tract at residues 110-131 is linker 1; it reads YEKFGPGSCRGLDHDYSRYFPI. The interval 132–223 is coil 1B; the sequence is IDDLRTQIIS…KNHEEEMQAL (92 aa). The linker 12 stretch occupies residues 224–246; it reads QCAAGGNVNVEMNAAPGVDLTVL. The segment at 247–385 is coil 2; that stretch reads LNNMRAEYEA…ETYCRLIDGD (139 aa). The tract at residues 386–448 is tail; sequence EGSCVKAKGQ…VNKTEQRIPS (63 aa). The interval 427 to 448 is disordered; sequence SRVHTLEEKSTKVNKTEQRIPS. Residues 430-448 are compositionally biased toward basic and acidic residues; sequence HTLEEKSTKVNKTEQRIPS.

The protein belongs to the intermediate filament family. Heterotetramer of two type I and two type II keratins. Interacts with KRT6A to form filaments. In terms of tissue distribution, expressed in skin. Expressed in the Henle layer and cuticle of the irs in hair follicle bulb. In the hair follicle, expression was observed in all layers of the irs but was stronger in the Henle layer and cuticle than the Huxley layer until the Henle layer differentiated (at protein level).

Its subcellular location is the cytoplasm. Essential for the proper assembly of type I and type II keratin protein complexes and formation of keratin intermediate filaments in the inner root sheath (irs). This Mus musculus (Mouse) protein is Keratin, type I cytoskeletal 27.